Consider the following 640-residue polypeptide: Glycosyltransferase-like protein gnt14 (640 aa).

The Cytoplasmic portion of the chain corresponds to 1 to 14 (MFGFKTTKNKKRVR). The chain crosses the membrane as a helical; Signal-anchor for type II membrane protein span at residues 15–35 (LLVVAIGVMIFFMCLSNFSSI). Residues 36 to 640 (QSRQSSSTDT…TENCYSNDHW (605 aa)) lie on the Extracellular side of the membrane. Disordered stretches follow at residues 63 to 184 (PSIN…PLSS) and 254 to 277 (NSNN…NNNY). Residues 65–171 (ININNSENNI…NININNNNKP (107 aa)) show a composition bias toward low complexity. Asparagine 68 carries an N-linked (GlcNAc...) asparagine glycan. N-linked (GlcNAc...) asparagine glycans are attached at residues asparagine 410 and asparagine 539.

The protein belongs to the glycosyltransferase 8 family. Highly divergent.

The protein localises to the membrane. This Dictyostelium discoideum (Social amoeba) protein is Glycosyltransferase-like protein gnt14 (gnt14).